A 103-amino-acid polypeptide reads, in one-letter code: Matrix Gla protein (103 aa).

An N-terminal signal peptide occupies residues 1–19 (MKSLLLLSVLAALAVAALC). Glu-21 is modified (4-carboxyglutamate). A phosphoserine mark is found at Ser-22, Ser-25, and Ser-28. The Gla domain maps to 51 to 97 (RAKAQERIRELNKPPYELNREACDDYKLCERYAMVYGYNAAYNRYFR). Glu-56, Glu-60, Glu-67, and Glu-71 each carry 4-carboxyglutamate. A disulfide bridge links Cys-73 with Cys-79.

It belongs to the osteocalcin/matrix Gla protein family. Requires vitamin K-dependent gamma-carboxylation for its function.

It is found in the secreted. Its function is as follows. Associates with the organic matrix of bone and cartilage. Thought to act as an inhibitor of bone formation. This is Matrix Gla protein (MGP) from Sus scrofa (Pig).